Reading from the N-terminus, the 491-residue chain is Lysine--tRNA ligase (491 aa).

Mg(2+)-binding residues include glutamate 398 and glutamate 405.

It belongs to the class-II aminoacyl-tRNA synthetase family. As to quaternary structure, homodimer. It depends on Mg(2+) as a cofactor.

Its subcellular location is the cytoplasm. The enzyme catalyses tRNA(Lys) + L-lysine + ATP = L-lysyl-tRNA(Lys) + AMP + diphosphate. The sequence is that of Lysine--tRNA ligase from Mycoplasmopsis synoviae (strain 53) (Mycoplasma synoviae).